The following is an 87-amino-acid chain: Small ribosomal subunit protein uS19 (87 aa).

The segment at 1 to 29 (MARSLKKGPFVDHHLQKKVDVQNKEGTKK) is disordered. Residues 9–28 (PFVDHHLQKKVDVQNKEGTK) are compositionally biased toward basic and acidic residues.

It belongs to the universal ribosomal protein uS19 family.

Functionally, protein S19 forms a complex with S13 that binds strongly to the 16S ribosomal RNA. This Protochlamydia amoebophila (strain UWE25) protein is Small ribosomal subunit protein uS19.